Reading from the N-terminus, the 157-residue chain is Protein-export protein SecB (157 aa).

It belongs to the SecB family. Homotetramer, a dimer of dimers. One homotetramer interacts with 1 SecA dimer.

The protein resides in the cytoplasm. Functionally, one of the proteins required for the normal export of preproteins out of the cell cytoplasm. It is a molecular chaperone that binds to a subset of precursor proteins, maintaining them in a translocation-competent state. It also specifically binds to its receptor SecA. This Photobacterium profundum (strain SS9) protein is Protein-export protein SecB.